Here is a 378-residue protein sequence, read N- to C-terminus: MPVQPCSLPAGFLPAAVSLPSQQTVIAEDETGKATIYHDAPLPIPEPHMVLVKTIAVSINPCDWKMPSRFPAPGARIGCDFAGIVLSIGPEAARIRRDLRIGDRVCGGIHGSNPIDLPSGSFSQYVAAHADLLLKLPNKLSFAQGAVLGGSVFATLWIALYESLGLEGTPDMPLQDDPPPVLVYGGSTSTGTAALQILRLSGYRPIATCSPHNNDLVRAAGAEKVFDYRSETCAADIKSYTNGRLRHVLDIITDLQSQLICYDTFSRVGGKYTCLEQPAEELHLRRTVRKEMIVGLAASGKEIALADGYERTANPQLRARSGEFFQTIQRLVDEGKFVPHPTRTVEGGFEGILKCLDILKSGGTSGEKLVVFVDRENP.

Residue 62-65 coordinates NADP(+); that stretch reads CDWK. 151–158 contributes to the substrate binding site; that stretch reads SVFATLWI. Residues 187–190, 210–213, Tyr-228, and 275–276 each bind NADP(+); these read STST, SPHN, and LE. A substrate-binding site is contributed by 295–299; the sequence is GLAAS. 364 to 365 contributes to the NADP(+) binding site; the sequence is TS.

Belongs to the zinc-containing alcohol dehydrogenase family. As to quaternary structure, monomer.

Its pathway is secondary metabolite biosynthesis. In terms of biological role, trans-enoyl reductase; part of the gene cluster that mediates the biosynthesis of oxaleimides, cytotoxic compounds containing an unusual disubstituted succinimide moiety. The first step of the pathway is provided by the HR-PKS poxF that serves in a new mode of collaborative biosynthesis with the PKS-NRPS poxE, by providing the olefin containing amino acid substrate via the synthesis of an ACP-bound dec-4-enoate. The cytochrome P450 monooxygenase poxM-catalyzed oxidation at the alpha-position creates the enzyme-bound 2-hydroxydec-4-enoyl-ACP thioester, which may be prone to spontaneous hydrolysis to yield 2-hydroxydec-4-enoic acid due to increased electrophilicity of the carbonyl. 2-hydroxydec-4-enoic acid can then be further oxidized by poxM to yield the alpha-ketoacid 2-oxodec-4-enoicacid, which is reductively aminated by the aminotransferase poxL to yield (S,E)-2-aminodec-4-enoic acid. The Hybrid PKS-NRPS synthetase poxE then performs condensation between the octaketide product of its PKS modules and the amino group of (S,E)-2-aminodec-4-enoic acid which is activated and incorporated by the adenylation domain. The resulting aminoacyl product can be cyclized by the Diels-Alderase PoxQ and reductively released by the reductive (R) domain of poxE to yield an aldehyde intermediate. The released aldehyde is then substrate for a Knoevenagel condensation by the hydrolyase poxO followed by an oxidation at the 5-position of the pyrrolidone ring. The presence of the olefin from the amino acid building block allows for migration of the substituted allyl group to occur. This allylic transposition reaction takes place in a conjugate addition, semipinacol-like fashion to yield a succinimide intermediate. Iterative two-electron oxidations of the C7 methyl of the succinimide intermediate to the carboxylic acid can be catalyzed by one of two remaining cytochrome P450 monooxygenasess poxC or poxD to yield oxaleimide A. Subsequent oxidation yields the maleimide scaffold oxaleimide I. Both oxaleimide A and oxaleimide I can undergo oxidative modifications in the decalin ring to yield the series of products oxaleimides B to H. In Penicillium oxalicum, this protein is Trans-enoyl reductase poxP.